Reading from the N-terminus, the 225-residue chain is PKHD-type hydroxylase YbiX (225 aa).

The Fe2OG dioxygenase domain occupies 78-177 (TLSTPLFNRY…RVASFMWIQS (100 aa)). Positions 96, 98, and 158 each coordinate Fe cation. Arginine 168 contributes to the 2-oxoglutarate binding site.

It depends on Fe(2+) as a cofactor. L-ascorbate serves as cofactor.

This is PKHD-type hydroxylase YbiX from Escherichia coli O45:K1 (strain S88 / ExPEC).